The sequence spans 301 residues: Protoheme IX farnesyltransferase 1 (301 aa).

The next 9 membrane-spanning stretches (helical) occupy residues 29-49 (VVAL…PTAV), 51-71 (VQPL…AAAL), 101-121 (ALIF…VLVN), 123-143 (LTAW…TAYL), 150-170 (NIVI…TAVT), 177-197 (ALLL…ALAI), 223-243 (CILL…LVGM), 244-264 (CGPM…YKAW), and 281-301 (FSIY…YLWS).

It belongs to the UbiA prenyltransferase family. Protoheme IX farnesyltransferase subfamily.

The protein resides in the cell inner membrane. It catalyses the reaction heme b + (2E,6E)-farnesyl diphosphate + H2O = Fe(II)-heme o + diphosphate. It participates in porphyrin-containing compound metabolism; heme O biosynthesis; heme O from protoheme: step 1/1. Functionally, converts heme B (protoheme IX) to heme O by substitution of the vinyl group on carbon 2 of heme B porphyrin ring with a hydroxyethyl farnesyl side group. The sequence is that of Protoheme IX farnesyltransferase 1 from Shewanella putrefaciens (strain CN-32 / ATCC BAA-453).